Consider the following 738-residue polypeptide: Catalase-peroxidase 2 (738 aa).

The N-terminal stretch at 1 to 26 (MKRTLPTLSALALSMSLALAAGQTQA) is a signal peptide. The segment at residues 104 to 226 (WHSAGVYRIF…LGATQMGLIY (123 aa)) is a cross-link (tryptophyl-tyrosyl-methioninium (Trp-Tyr) (with M-252)). Histidine 105 (proton acceptor) is an active-site residue. A cross-link (tryptophyl-tyrosyl-methioninium (Tyr-Met) (with W-104)) is located at residues 226-252 (YVNPEGPNGVPDPLAAARDIRETFGRM). Histidine 267 lines the heme b pocket.

This sequence belongs to the peroxidase family. Peroxidase/catalase subfamily. Homodimer or homotetramer. The cofactor is heme b. In terms of processing, formation of the three residue Trp-Tyr-Met cross-link is important for the catalase, but not the peroxidase activity of the enzyme.

The catalysed reaction is H2O2 + AH2 = A + 2 H2O. The enzyme catalyses 2 H2O2 = O2 + 2 H2O. Its function is as follows. Bifunctional enzyme with both catalase and broad-spectrum peroxidase activity. This chain is Catalase-peroxidase 2, found in Shewanella amazonensis (strain ATCC BAA-1098 / SB2B).